Reading from the N-terminus, the 417-residue chain is Histidine--tRNA ligase (417 aa).

The protein belongs to the class-II aminoacyl-tRNA synthetase family. In terms of assembly, homodimer.

The protein localises to the cytoplasm. It catalyses the reaction tRNA(His) + L-histidine + ATP = L-histidyl-tRNA(His) + AMP + diphosphate + H(+). In Nitratidesulfovibrio vulgaris (strain ATCC 29579 / DSM 644 / CCUG 34227 / NCIMB 8303 / VKM B-1760 / Hildenborough) (Desulfovibrio vulgaris), this protein is Histidine--tRNA ligase.